Here is a 482-residue protein sequence, read N- to C-terminus: Pentatricopeptide repeat-containing protein At1g74900, mitochondrial (482 aa).

11 PPR repeats span residues 90-124 (DASSFDLAIDIAARLHLHPTVWSLIHRMRSLRIGP), 125-159 (SPKTFAIVAERYASAGKPDKAVKLFLNMHEHGCFQ), 160-190 (DLASFNTILDVLCKSKRVEKAYELFRALRGR), 194-228 (DTVTYNVILNGWCLIKRTPKALEVLKEMVERGINP), 229-263 (NLTTYNTMLKGFFRAGQIRHAWEFFLEMKKRDCEI), 264-298 (DVVTYTTVVHGFGVAGEIKRARNVFDEMIREGVLP), 299-333 (SVATYNAMIQVLCKKDNVENAVVMFEEMVRRGYEP), 334-368 (NVTTYNVLIRGLFHAGEFSRGEELMQRMENEGCEP), 369-403 (NFQTYNMMIRYYSECSEVEKALGLFEKMGSGDCLP), 404-441 (NLDTYNILISGMFVRKRSEDMVVAGKLLLEMVERGFIP), and 442-476 (RKFTFNRVLNGLLLTGNQAFAKEILRLQSKSGSRL).

The protein belongs to the PPR family. P subfamily.

The protein localises to the mitochondrion. In terms of biological role, required for the trans-splicing of intron 1 of the mitochondrial nad1 transcript encoding the ND1 subunit of the mitochondrial membrane respiratory chain NADH dehydrogenase (Complex I). The protein is Pentatricopeptide repeat-containing protein At1g74900, mitochondrial (OTP43) of Arabidopsis thaliana (Mouse-ear cress).